The chain runs to 200 residues: Serine/threonine-protein kinase mos (200 aa).

The 199-residue stretch at 2-200 (LCLLQPLGSG…ELLKGERVTA (199 aa)) folds into the Protein kinase domain. Residues 8-16 (LGSGGFGSV) and lysine 29 contribute to the ATP site. Aspartate 143 serves as the catalytic Proton acceptor.

This sequence belongs to the protein kinase superfamily. Ser/Thr protein kinase family.

The enzyme catalyses L-seryl-[protein] + ATP = O-phospho-L-seryl-[protein] + ADP + H(+). It catalyses the reaction L-threonyl-[protein] + ATP = O-phospho-L-threonyl-[protein] + ADP + H(+). The protein is Serine/threonine-protein kinase mos (MOS) of Apteryx australis (Southern brown kiwi).